The sequence spans 182 residues: Dynactin subunit 5 (182 aa).

An N-acetylmethionine modification is found at Met1.

The protein belongs to the dynactin subunits 5/6 family. Dynactin subunit 5 subfamily. Subunit of dynactin, a multiprotein complex part of a tripartite complex with dynein and a adapter, such as BICDL1, BICD2 or HOOK3. The dynactin complex is built around ACTR1A/ACTB filament and consists of an actin-related filament composed of a shoulder domain, a pointed end and a barbed end. Its length is defined by its flexible shoulder domain. The soulder is composed of 2 DCTN1 subunits, 4 DCTN2 and 2 DCTN3. The 4 DCNT2 (via N-terminus) bind the ACTR1A filament and act as molecular rulers to determine the length. The pointed end is important for binding dynein-dynactin cargo adapters. Consists of 4 subunits: ACTR10, DCNT4, DCTN5 and DCTN6. Within the complex DCTN6 forms a heterodimer with DCTN5. The barbed end is composed of a CAPZA1:CAPZB heterodimers, which binds ACTR1A/ACTB filament and dynactin and stabilizes dynactin. Interacts with N4BP2L1.

Its subcellular location is the cytoplasm. It localises to the cytoskeleton. It is found in the chromosome. The protein localises to the centromere. The protein resides in the kinetochore. Part of the dynactin complex that activates the molecular motor dynein for ultra-processive transport along microtubules. The polypeptide is Dynactin subunit 5 (DCTN5) (Pongo abelii (Sumatran orangutan)).